A 226-amino-acid chain; its full sequence is Cytidylate kinase (226 aa).

ATP is bound at residue 14–22 (GPAGAGKST).

This sequence belongs to the cytidylate kinase family. Type 1 subfamily.

It is found in the cytoplasm. The enzyme catalyses CMP + ATP = CDP + ADP. It catalyses the reaction dCMP + ATP = dCDP + ADP. In Symbiobacterium thermophilum (strain DSM 24528 / JCM 14929 / IAM 14863 / T), this protein is Cytidylate kinase.